The sequence spans 283 residues: ATP synthase gamma chain (283 aa).

The protein belongs to the ATPase gamma chain family. As to quaternary structure, F-type ATPases have 2 components, CF(1) - the catalytic core - and CF(0) - the membrane proton channel. CF(1) has five subunits: alpha(3), beta(3), gamma(1), delta(1), epsilon(1). CF(0) has three main subunits: a, b and c.

The protein localises to the cell membrane. In terms of biological role, produces ATP from ADP in the presence of a proton gradient across the membrane. The gamma chain is believed to be important in regulating ATPase activity and the flow of protons through the CF(0) complex. The protein is ATP synthase gamma chain of Clostridium perfringens (strain ATCC 13124 / DSM 756 / JCM 1290 / NCIMB 6125 / NCTC 8237 / Type A).